Reading from the N-terminus, the 166-residue chain is Urease accessory protein UreE (166 aa).

A disordered region spans residues 133 to 154 (QPEHGAYGGGHHHSRHGDEDFN).

This sequence belongs to the UreE family.

It localises to the cytoplasm. Its function is as follows. Involved in urease metallocenter assembly. Binds nickel. Probably functions as a nickel donor during metallocenter assembly. The chain is Urease accessory protein UreE from Pseudomonas fluorescens (strain SBW25).